Consider the following 131-residue polypeptide: Aspartate 1-decarboxylase (131 aa).

The Schiff-base intermediate with substrate; via pyruvic acid role is filled by Ser25. Ser25 carries the pyruvic acid (Ser) modification. Thr57 is a substrate binding site. Tyr58 acts as the Proton donor in catalysis. A substrate-binding site is contributed by Gly73 to Ala75.

The protein belongs to the PanD family. As to quaternary structure, heterooctamer of four alpha and four beta subunits. Pyruvate serves as cofactor. Post-translationally, is synthesized initially as an inactive proenzyme, which is activated by self-cleavage at a specific serine bond to produce a beta-subunit with a hydroxyl group at its C-terminus and an alpha-subunit with a pyruvoyl group at its N-terminus.

It localises to the cytoplasm. It catalyses the reaction L-aspartate + H(+) = beta-alanine + CO2. It functions in the pathway cofactor biosynthesis; (R)-pantothenate biosynthesis; beta-alanine from L-aspartate: step 1/1. Functionally, catalyzes the pyruvoyl-dependent decarboxylation of aspartate to produce beta-alanine. The polypeptide is Aspartate 1-decarboxylase (Leptothrix cholodnii (strain ATCC 51168 / LMG 8142 / SP-6) (Leptothrix discophora (strain SP-6))).